A 324-amino-acid polypeptide reads, in one-letter code: Pseudouridine-5'-phosphate glycosidase (324 aa).

Glutamate 43 (proton donor) is an active-site residue. Substrate contacts are provided by lysine 104 and valine 124. Aspartate 156 contacts Mn(2+). 158–160 is a substrate binding site; that stretch reads SAD. The Nucleophile role is filled by lysine 177.

This sequence belongs to the pseudouridine-5'-phosphate glycosidase family. In terms of assembly, homotrimer. Requires Mn(2+) as cofactor.

It carries out the reaction D-ribose 5-phosphate + uracil = psi-UMP + H2O. Its function is as follows. Catalyzes the reversible cleavage of pseudouridine 5'-phosphate (PsiMP) to ribose 5-phosphate and uracil. Functions biologically in the cleavage direction, as part of a pseudouridine degradation pathway. This is Pseudouridine-5'-phosphate glycosidase from Salinispora tropica (strain ATCC BAA-916 / DSM 44818 / JCM 13857 / NBRC 105044 / CNB-440).